The following is a 360-amino-acid chain: Phenylalanine--tRNA ligase alpha subunit (360 aa).

E260 is a Mg(2+) binding site.

Belongs to the class-II aminoacyl-tRNA synthetase family. Phe-tRNA synthetase alpha subunit type 1 subfamily. Tetramer of two alpha and two beta subunits. Requires Mg(2+) as cofactor.

The protein localises to the cytoplasm. The enzyme catalyses tRNA(Phe) + L-phenylalanine + ATP = L-phenylalanyl-tRNA(Phe) + AMP + diphosphate + H(+). This Rhodopseudomonas palustris (strain ATCC BAA-98 / CGA009) protein is Phenylalanine--tRNA ligase alpha subunit.